Consider the following 146-residue polypeptide: uncharacterized protein (146 aa).

Residues 34–135 (EDKIVNDVMT…PLLEKAHALF (102 aa)) enclose the Glutaredoxin domain. A [2Fe-2S] cluster-binding site is contributed by C54.

It belongs to the glutaredoxin family. Monothiol subfamily.

This is an uncharacterized protein from Caenorhabditis elegans.